Reading from the N-terminus, the 683-residue chain is DNA-directed RNA polymerase subunit beta' (683 aa).

C69, C71, C87, and C90 together coordinate Zn(2+). Mg(2+)-binding residues include D489, D491, and D493.

The protein belongs to the RNA polymerase beta' chain family. RpoC1 subfamily. As to quaternary structure, in plastids the minimal PEP RNA polymerase catalytic core is composed of four subunits: alpha, beta, beta', and beta''. When a (nuclear-encoded) sigma factor is associated with the core the holoenzyme is formed, which can initiate transcription. It depends on Mg(2+) as a cofactor. Zn(2+) is required as a cofactor.

It localises to the plastid. The protein localises to the chloroplast. It catalyses the reaction RNA(n) + a ribonucleoside 5'-triphosphate = RNA(n+1) + diphosphate. DNA-dependent RNA polymerase catalyzes the transcription of DNA into RNA using the four ribonucleoside triphosphates as substrates. The protein is DNA-directed RNA polymerase subunit beta' of Triticum aestivum (Wheat).